The chain runs to 1914 residues: Autophagy-related protein 2 homolog A (1914 aa).

The Chorein N-terminal domain maps to 14-112; it reads ERVCRYLLQH…LTLQPRQGSG (99 aa). A phosphoserine mark is found at Ser-764, Ser-869, Ser-875, and Ser-877. The tract at residues 1222-1243 is disordered; the sequence is DLHPPPRPPSPTEIAGQKLSES. 3 positions are modified to phosphoserine: Ser-1246, Ser-1282, and Ser-1290. The tract at residues 1299–1337 is disordered; sequence GERSGAQAPLPPPGASSHTLGSKAKEHENEEEGDGDTLD. A compositionally biased stretch (acidic residues) spans 1327-1337; that stretch reads NEEEGDGDTLD. The segment at 1337–1383 is WIPI-interacting; it reads DSDEFCILDAPGLGIAPRDGEPIVTQLHPGPIIVHDGHFSQPLGSTD. At Ser-1381 the chain carries Phosphoserine. Disordered stretches follow at residues 1427-1452, 1589-1634, and 1803-1822; these read LTGPRVSPSRSSGPNRPQNSWRTQGG, MVPG…SSSD, and RSLQDKRSSRKLRRGQQPAD. Over residues 1429–1446 the composition is skewed to low complexity; the sequence is GPRVSPSRSSGPNRPQNS.

Belongs to the ATG2 family. As to quaternary structure, interacts with ATG9A (via C-terminus). Interacts with TMEM41B. Interacts with VMP1.

The protein resides in the preautophagosomal structure membrane. The protein localises to the lipid droplet. It is found in the endoplasmic reticulum membrane. It carries out the reaction a 1,2-diacyl-sn-glycero-3-phospho-L-serine(in) = a 1,2-diacyl-sn-glycero-3-phospho-L-serine(out). It catalyses the reaction a 1,2-diacyl-sn-glycero-3-phosphoethanolamine(in) = a 1,2-diacyl-sn-glycero-3-phosphoethanolamine(out). In terms of biological role, lipid transfer protein involved in autophagosome assembly. Tethers the edge of the isolation membrane (IM) to the endoplasmic reticulum (ER) and mediates direct lipid transfer from ER to IM for IM expansion. Binds to the ER exit site (ERES), which is the membrane source for autophagosome formation, and extracts phospholipids from the membrane source and transfers them to ATG9 (ATG9A or ATG9B) to the IM for membrane expansion. Lipid transfer activity is enhanced by WIPI1 and WDR45/WIPI4, which promote ATG2A-association with phosphatidylinositol 3-monophosphate (PI3P)-containing membranes. Also regulates lipid droplets morphology and distribution within the cell. Its function is as follows. (Microbial infection) Mediates the intracellular lifestyle of Cryptococcus neoformans by supporting infection. The protein is Autophagy-related protein 2 homolog A of Mus musculus (Mouse).